The sequence spans 555 residues: MTKVVGMATVLGPRPPQESMGPSPIKVEEDEEKDKCCPTLELSHKHFRQSGNQDTLEPMGPSTIKAEEDESKDKCRPNLEISRKSFKQFGYQDTLEQLGPSTIKAEEDDEKDKGHPSPEISRQRFRQFGYHDTPGPREALSQLRVLCCEWLQPEIHTKEQILELLVLEQFLTILPRELQTWVQQHCPESAEEAVTLLEDLEQELDEPGLQVSSPPNEQKQSWEKMSTSGTAMESLSSTETQHVDASPKYEFWGPLYIQETGEEEVFTQDPRKRQGFKSNPQKEDSADEHRSSEEESHADGLKRTVIPMIPANKYGSRSERQWANNLERERGTKASLQDTGSRKGAEPASTRPAPGEKRYICAECGKAFSNSSNLTKHRRTHTGEKPYVCTKCGKAFSHSSNLTLHYRTHLVDRPYDCKCGKAFGQSSDLLKHQRMHTEEAPYQCKDCGKAFSGKGSLIRHYRIHTGEKPYQCNECGKSFSQHAGLSSHQRLHTGEKPYKCKECGKAFNHSSNFNKHHRIHTGEKPYWCSHCGKTFCSKSNLSKHQRVHTGEGEVQ.

Disordered stretches follow at residues 1–74 (MTKV…SKDK), 102–133 (TIKA…YHDT), 204–243 (LDEP…TQHV), and 263–354 (EEVF…RPAP). A run of 3 repeats spans residues 18 to 56 (ESMG…QDTL), 57 to 95 (EPMG…QDTL), and 96 to 134 (EQLG…HDTP). The tract at residues 18-134 (ESMGPSPIKV…FRQFGYHDTP (117 aa)) is 3 X 39 AA approximate tandem repeats. Lys-26 is covalently cross-linked (Glycyl lysine isopeptide (Lys-Gly) (interchain with G-Cter in SUMO2)). Residues 122–204 (RQRFRQFGYH…TLLEDLEQEL (83 aa)) form the SCAN box domain. Residues 210–240 (QVSSPPNEQKQSWEKMSTSGTAMESLSSTET) are compositionally biased toward polar residues. Residues 280 to 302 (PQKEDSADEHRSSEEESHADGLK) are compositionally biased toward basic and acidic residues. Glycyl lysine isopeptide (Lys-Gly) (interchain with G-Cter in SUMO2) cross-links involve residues Lys-302 and Lys-313. Positions 316–332 (SRSERQWANNLERERGT) are enriched in basic and acidic residues. 7 consecutive C2H2-type zinc fingers follow at residues 359–381 (YICA…RRTH), 387–409 (YVCT…YRTH), 415–436 (YDCK…QRMH), 442–464 (YQCK…YRIH), 470–492 (YQCN…QRLH), 498–520 (YKCK…HRIH), and 526–548 (YWCS…QRVH). Residue Lys-431 forms a Glycyl lysine isopeptide (Lys-Gly) (interchain with G-Cter in SUMO2) linkage.

It belongs to the krueppel C2H2-type zinc-finger protein family. As to expression, expressed predominantly in the spermatocytes and spermatids of adult testes. It is also present at lower levels in the ovary, brain, spleen, embryo and fetus.

It localises to the nucleus. Functionally, strong transcriptional activator. Plays an important role in spermatogenesis; essential for the progression of meiotic prophase I in spermatocytes. The sequence is that of Zinc finger and SCAN domain-containing protein 21 (Zscan21) from Mus musculus (Mouse).